A 302-amino-acid polypeptide reads, in one-letter code: GATA transcription factor 28 (302 aa).

The disordered stretch occupies residues 47 to 66 (NAGGMSEGVETDIPSHPGNV). A Tify domain is found at 77–112 (GSEQGDQLTLSFQGQVYVFDSVLPEKVQAVLLLLGG). The interval 119 to 141 (APPGLGSPHQNNRVSSLPGTPQR) is disordered. The segment covering 126–141 (PHQNNRVSSLPGTPQR) has biased composition (polar residues). Residues 147-189 (RLASLVRFREKRKGRNFDKKIRYTVRKEVALRMQRNKGQFTSA) form the CCT domain. The GATA-type zinc-finger motif lies at 217 to 273 (QHQEISCRHCGIGEKSTPMMRRGPAGPRTLCNACGLMWANKGAFRDLSKASPQTAQN).

This sequence belongs to the type IV zinc-finger family. Class C subfamily. As to expression, predominantly expressed in shoot apices, inflorescences and roots.

It localises to the nucleus. Its function is as follows. Transcriptional activator that specifically binds 5'-GATA-3' or 5'-GAT-3' motifs within gene promoters. The protein is GATA transcription factor 28 (GATA28) of Arabidopsis thaliana (Mouse-ear cress).